Reading from the N-terminus, the 257-residue chain is Zinc uptake system ATP-binding protein ZurA (257 aa).

Positions 5 to 241 (IEVNNVSYHY…ADRELEILAE (237 aa)) constitute an ABC transporter domain. 37-44 (GPNGSGKS) is an ATP binding site.

This sequence belongs to the ABC transporter superfamily.

Involved in a zinc uptake transport system. In Listeria innocua serovar 6a (strain ATCC BAA-680 / CLIP 11262), this protein is Zinc uptake system ATP-binding protein ZurA (zurA).